The chain runs to 199 residues: MSSAPIGILGGTFDPIHYGHLAIAEEVRVALRLDRVLIIPAGEQPLKIGKHMAPPEHRLAMARLACADNPFFEVSSIEIDRPGPSYTHVTLQLLHDQGLENLYLILGADALADLPRWRETPRILTLARIVVVSRPGAAIDLPALAEMFPALPERLILIEGPRLDISSTDLRQRVAQGRPIRYQTPDAVVAYIEAHGLYR.

The protein belongs to the NadD family.

The catalysed reaction is nicotinate beta-D-ribonucleotide + ATP + H(+) = deamido-NAD(+) + diphosphate. It participates in cofactor biosynthesis; NAD(+) biosynthesis; deamido-NAD(+) from nicotinate D-ribonucleotide: step 1/1. Functionally, catalyzes the reversible adenylation of nicotinate mononucleotide (NaMN) to nicotinic acid adenine dinucleotide (NaAD). This is Probable nicotinate-nucleotide adenylyltransferase from Roseiflexus sp. (strain RS-1).